Reading from the N-terminus, the 330-residue chain is MQKSFILQQQEISFVKNTFTQNLIEQLDIIEVQGPILSEVGNGMQDNLSGIEKAVQVNVKCIPGAVYEVVHSLAKWKRHTLARFGFQEGEGLFVHMKALRPDEDSLDPTHSVYVDQWDWEKVIPAGKRNFDYLKQTVRSIYRAIRLTELAVEARFDIPSVLPKEITFVHSEDLVKRCPTLTSKERENAICKEYGAVFLIGIGGKLSDGKAHDGRAPDYDDWTTVSEGEYKGLNGDILVWNEQLGTAFELSSMGIRVDETALRLQVALTGDEDRLEMDWHKDLLAGRLPLSIGGGIGQSRMAMFLLRKKHIGEVQSSVWPKEMLAKFENIL.

This sequence belongs to the class-II aminoacyl-tRNA synthetase family. AsnA subfamily.

It localises to the cytoplasm. The catalysed reaction is L-aspartate + NH4(+) + ATP = L-asparagine + AMP + diphosphate + H(+). The protein operates within amino-acid biosynthesis; L-asparagine biosynthesis; L-asparagine from L-aspartate (ammonia route): step 1/1. The protein is Aspartate--ammonia ligase of Glaesserella parasuis serovar 5 (strain SH0165) (Haemophilus parasuis).